Reading from the N-terminus, the 341-residue chain is Putative UPF0607 protein FLJ37424 (341 aa).

Disordered stretches follow at residues 72–131 (PKTE…NPRP) and 216–283 (GLLM…LPCL). A compositionally biased stretch (basic and acidic residues) spans 79-101 (EEPKEATEVKDQVETQGQEDNKR). Polar residues predominate over residues 108-127 (EAASTSRPLETQGNLTSSWY). Residues 243–252 (AGHRSHKRKL) show a composition bias toward basic residues.

This sequence belongs to the UPF0607 family.

In Homo sapiens (Human), this protein is Putative UPF0607 protein FLJ37424.